A 619-amino-acid polypeptide reads, in one-letter code: Schlafen family member 12-like (619 aa).

The chain crosses the membrane as a helical span at residues 598–618; it reads IFLFVCLFRFCLFVCLFVFFL.

It belongs to the Schlafen family.

Its subcellular location is the membrane. The protein is Schlafen family member 12-like (SLFN12L) of Pongo abelii (Sumatran orangutan).